A 392-amino-acid polypeptide reads, in one-letter code: Serine protease ea (392 aa).

The N-terminal stretch at 1-19 is a signal peptide; that stretch reads MLKPSIICLFLGILAKSSA. Positions 20–127 are cleaved as a propeptide — activation peptide; sequence GQFYFPNEAA…GQCGNILSNR (108 aa). Residues 36–89 enclose the Clip domain; that stretch reads RCITPNRERALCIHLEDCKYLYGLLTTTPLRDTDRLYLSRSQCGYTNGKVLICC. Disulfide bonds link Cys-37/Cys-88, Cys-47/Cys-78, and Cys-53/Cys-89. N-linked (GlcNAc...) asparagine glycosylation is present at Asn-107. Disulfide bonds link Cys-120–Cys-260, Cys-158–Cys-174, Cys-202–Cys-212, Cys-307–Cys-324, and Cys-334–Cys-367. The Peptidase S1 domain maps to 128-391; that stretch reads IYGGMKTKID…YVDWIQNTIE (264 aa). The Charge relay system role is filled by His-173. Ca(2+)-binding residues include Glu-193, Asp-195, Thr-198, and Asp-201. Asp-240 (charge relay system) is an active-site residue. The active-site Charge relay system is Ser-338.

Belongs to the peptidase S1 family. CLIP subfamily. In terms of assembly, interacts with Spn27A; the two proteins are covalently linked leading to inhibition of ea catalytic activity. Interacts (via Peptidase domain) with snk (via N-terminal prodomain); leads to proteolytic activation of ea by snk. Sulfation of a vitelline membrane component by pip is required for proteolytic cleavage of ea by snk but not for the interaction of ea with snk. Post-translationally, proteolytically cleaved by snk. Activation peptide and active catalytic domain remain associated by a disulfide bond. Processed ea/easter is present in extremely low amounts in the early embryo as it is rapidly converted into a high molecular mass complex made up of ea covalently bound to the serpin Spn27A. Zymogen activation is also controlled by a negative feedback loop from Dorsal.

The protein localises to the secreted. Its activity is regulated as follows. Activated proteolytically by snk; activation requires both activation of the ndl-gd-snk protease cascade and sulfation of a vitelline membrane component by pip. Inhibited by binding of the serpin Spn27A. In terms of biological role, component of the extracellular signaling pathway that establishes the dorsal-ventral pathway of the embryo. A protease cascade involving ndl, gd, snk and ea results in activation of the spz Toll receptor ligand; acts downstream of ndl, gd and snk and is required for proteolytic processing of spz. Activation of ea requires both activation of the ndl-gd-snk protease cascade and sulfation of a vitelline membrane component by pip. Localized activation of the Toll receptor in the ventral region of the embryo defines cell identities along the dorsal-ventral continuum. This chain is Serine protease ea, found in Drosophila melanogaster (Fruit fly).